A 739-amino-acid polypeptide reads, in one-letter code: Sulfate transporter (739 aa).

The interval 1-27 is disordered; the sequence is MSSESKEQHNVSPRDSAEGNDSYPSGI. Residues S12 and S16 each carry the phosphoserine modification. Transmembrane regions (helical) follow at residues 112–132 and 137–157; these read VMSG…YSLL and PVYG…LGTS. N-linked (GlcNAc...) asparagine glycosylation is found at N199 and N205. Helical transmembrane passes span 219–239 and 242–262; these read IMVG…MGFF and GFVS…GASF. N357 carries an N-linked (GlcNAc...) asparagine glycan. 4 helical membrane-spanning segments follow: residues 378 to 398, 420 to 440, 455 to 475, and 524 to 544; these read LIPS…AITV, AIGF…SAAL, LSGV…APLF, and LLST…CVIL. The STAS domain maps to 568-719; the sequence is AYKNLQIKPG…YSVYEAMAFA (152 aa).

Belongs to the SLC26A/SulP transporter (TC 2.A.53) family. Post-translationally, N-glycosylated. In terms of tissue distribution, ubiquitously expressed.

It is found in the cell membrane. The protein resides in the apical cell membrane. The enzyme catalyses oxalate(in) + sulfate(out) = oxalate(out) + sulfate(in). It catalyses the reaction sulfate(out) + 2 chloride(in) = sulfate(in) + 2 chloride(out). It carries out the reaction oxalate(out) + 2 chloride(in) = oxalate(in) + 2 chloride(out). The catalysed reaction is bromide(in) + chloride(out) = bromide(out) + chloride(in). The enzyme catalyses nitrate(in) + chloride(out) = nitrate(out) + chloride(in). It catalyses the reaction iodide(in) + chloride(out) = iodide(out) + chloride(in). Its activity is regulated as follows. An extracellular acidic pH inhibits chloride-sulfate and chloride-oxalate exchange activity whereas an intracellular acidic pH activates chloride-sulfate exchange with no effect on chloride-oxalate exchange activity. Its function is as follows. Sulfate transporter which mediates sulfate uptake into chondrocytes in order to maintain adequate sulfation of proteoglycans which is needed for cartilage development. Mediates electroneutral anion exchange of sulfate ions for oxalate ions and of sulfate and oxalate ions for chloride ions. Mediates exchange of sulfate and oxalate ions for hydroxyl ions and of chloride ions for bromide, iodide and nitrate ions. The coupling of sulfate transport to both hydroxyl and chloride ions likely serves to ensure transport at both acidic pH when most sulfate uptake is mediated by sulfate-hydroxide exchange and alkaline pH when most sulfate uptake is mediated by sulfate-chloride exchange. Essential for chondrocyte proliferation, differentiation and cell size expansion. This chain is Sulfate transporter (SLC26A2), found in Homo sapiens (Human).